The sequence spans 350 residues: MAAPALRVVRVYLDGAHGLGKTTTGRALAAAASAAGGPVLFFPEPMAYWRTMFPTDALSGILAASARRAAAQGGRADADAAGLVAYYQARFAAPYLVLHARVAALLAPPEPAPGGDDVVTLVFDRHPLAACLCYPFARYCLREINAEDLLALAATAPLEAPGANLVVCTLPPAEQQRRLAARARPGDRADAGFWPPLRNAYALLANTCAFLGAGGAWRDGWDALGWADADALAALADPRGGGREPVPAPALRDTLFAALKCRELYPGGGADLPAVHAWALDALADRLAALEVFMDVSAAPDACAAAVLGMRPAMRRRRADGAAGATLADLARRFAREMTPGGPEAAPRGL.

An ATP-binding site is contributed by 15–22; sequence GAHGLGKT. Glu-44 functions as the Proton acceptor in the catalytic mechanism. Gln-88 is a substrate binding site. Residue Arg-178 coordinates ATP. Residue Arg-184 coordinates substrate.

The protein belongs to the herpesviridae thymidine kinase family. As to quaternary structure, homodimer.

The catalysed reaction is thymidine + ATP = dTMP + ADP + H(+). In terms of biological role, catalyzes the transfer of the gamma-phospho group of ATP to thymidine to generate dTMP in the salvage pathway of pyrimidine synthesis. The dTMP serves as a substrate for DNA polymerase during viral DNA replication. Allows the virus to be reactivated and to grow in non-proliferative cells lacking a high concentration of phosphorylated nucleic acid precursors. The protein is Thymidine kinase of Bos taurus (Bovine).